The sequence spans 264 residues: 3-methyl-2-oxobutanoate hydroxymethyltransferase 1 (264 aa).

2 residues coordinate Mg(2+): Asp-45 and Asp-84. 3-methyl-2-oxobutanoate is bound by residues 45 to 46, Asp-84, and Lys-112; that span reads DS. Residue Glu-114 participates in Mg(2+) binding. Glu-181 serves as the catalytic Proton acceptor.

The protein belongs to the PanB family. Homodecamer; pentamer of dimers. The cofactor is Mg(2+).

The protein localises to the cytoplasm. It carries out the reaction 3-methyl-2-oxobutanoate + (6R)-5,10-methylene-5,6,7,8-tetrahydrofolate + H2O = 2-dehydropantoate + (6S)-5,6,7,8-tetrahydrofolate. Its pathway is cofactor biosynthesis; (R)-pantothenate biosynthesis; (R)-pantoate from 3-methyl-2-oxobutanoate: step 1/2. In terms of biological role, catalyzes the reversible reaction in which hydroxymethyl group from 5,10-methylenetetrahydrofolate is transferred onto alpha-ketoisovalerate to form ketopantoate. The chain is 3-methyl-2-oxobutanoate hydroxymethyltransferase 1 from Aliivibrio fischeri (strain ATCC 700601 / ES114) (Vibrio fischeri).